The primary structure comprises 229 residues: Peptidase E (229 aa).

Residues Ser-120, Asp-135, and His-157 each act as charge relay system in the active site.

The protein belongs to the peptidase S51 family.

The protein resides in the cytoplasm. It catalyses the reaction Dipeptidase E catalyzes the hydrolysis of dipeptides Asp-|-Xaa. It does not act on peptides with N-terminal Glu, Asn or Gln, nor does it cleave isoaspartyl peptides.. In terms of biological role, hydrolyzes dipeptides containing N-terminal aspartate residues. May play a role in allowing the cell to use peptide aspartate to spare carbon otherwise required for the synthesis of the aspartate family of amino acids. The sequence is that of Peptidase E from Shigella flexneri serotype 5b (strain 8401).